We begin with the raw amino-acid sequence, 192 residues long: Protein Syd (192 aa).

Belongs to the Syd family.

It localises to the cell inner membrane. Functionally, interacts with the SecY protein in vivo. May bind preferentially to an uncomplexed state of SecY, thus functioning either as a chelating agent for excess SecY in the cell or as a regulatory factor that negatively controls the translocase function. This chain is Protein Syd, found in Hahella chejuensis (strain KCTC 2396).